The sequence spans 329 residues: Cathepsin K (329 aa).

The signal sequence occupies residues 1–15; the sequence is MWGLKVLLLPVVSFA. The propeptide at 16 to 114 is activation peptide; the sequence is LHPEEILDTQ…TLYIPDWEGR (99 aa). Residue Asn-103 is glycosylated (N-linked (GlcNAc...) asparagine). Cystine bridges form between Cys-136–Cys-177 and Cys-170–Cys-210. Cys-139 is an active-site residue. Asn-268 is a glycosylation site (N-linked (GlcNAc...) asparagine). Cys-269 and Cys-318 are joined by a disulfide. Catalysis depends on residues His-276 and Asn-296.

Belongs to the peptidase C1 family. As to expression, predominantly expressed in osteclasts (bones).

It is found in the lysosome. It localises to the secreted. Its subcellular location is the apical cell membrane. The catalysed reaction is Broad proteolytic activity. With small-molecule substrates and inhibitors, the major determinant of specificity is P2, which is preferably Leu, Met &gt; Phe, and not Arg.. In terms of biological role, thiol protease involved in osteoclastic bone resorption and may participate partially in the disorder of bone remodeling. Displays potent endoprotease activity against fibrinogen at acid pH. May play an important role in extracellular matrix degradation. Involved in the release of thyroid hormone thyroxine (T4) by limited proteolysis of TG/thyroglobulin in the thyroid follicle lumen. This is Cathepsin K (CTSK) from Oryctolagus cuniculus (Rabbit).